Consider the following 387-residue polypeptide: Formate-dependent phosphoribosylglycinamide formyltransferase (387 aa).

N(1)-(5-phospho-beta-D-ribosyl)glycinamide-binding positions include 12–13 (EL) and Glu72. ATP is bound by residues Arg104, Lys145, 150–155 (SSGKGQ), 185–188 (EEFI), and Glu193. An ATP-grasp domain is found at 109 to 300 (DLAARELGLA…EFELHLRAVL (192 aa)). Glu258 and Glu270 together coordinate Mg(2+). Residues Asp277, Lys347, and 354 to 355 (RR) each bind N(1)-(5-phospho-beta-D-ribosyl)glycinamide.

The protein belongs to the PurK/PurT family. Homodimer.

The enzyme catalyses N(1)-(5-phospho-beta-D-ribosyl)glycinamide + formate + ATP = N(2)-formyl-N(1)-(5-phospho-beta-D-ribosyl)glycinamide + ADP + phosphate + H(+). The protein operates within purine metabolism; IMP biosynthesis via de novo pathway; N(2)-formyl-N(1)-(5-phospho-D-ribosyl)glycinamide from N(1)-(5-phospho-D-ribosyl)glycinamide (formate route): step 1/1. Functionally, involved in the de novo purine biosynthesis. Catalyzes the transfer of formate to 5-phospho-ribosyl-glycinamide (GAR), producing 5-phospho-ribosyl-N-formylglycinamide (FGAR). Formate is provided by PurU via hydrolysis of 10-formyl-tetrahydrofolate. In Anaeromyxobacter dehalogenans (strain 2CP-C), this protein is Formate-dependent phosphoribosylglycinamide formyltransferase.